A 498-amino-acid chain; its full sequence is Acetylcholine receptor subunit alpha-type acr-16 (498 aa).

An N-terminal signal peptide occupies residues 1 to 19; the sequence is MSVCTLLISCAILAAPTLG. Over 20 to 230 the chain is Extracellular; it reads SLQERRLYED…FYLHMRRRTL (211 aa). N-linked (GlcNAc...) asparagine glycans are attached at residues asparagine 43 and asparagine 93. 2 disulfides stabilise this stretch: cysteine 147–cysteine 161 and cysteine 211–cysteine 212. 3 helical membrane-spanning segments follow: residues 231–252, 261–279, and 295–314; these read YYGF…LGFT, ITLQ…SIVS, and FFTC…VYVL. The Cytoplasmic portion of the chain corresponds to 315–472; sequence NLHYRTPETH…WKFAAMVVDR (158 aa). A helical transmembrane segment spans residues 473-493; that stretch reads LCLYVFTIFIIVSTIGIFWSA.

The protein belongs to the ligand-gated ion channel (TC 1.A.9) family. Acetylcholine receptor (TC 1.A.9.1) subfamily. Expressed in the body wall muscle.

The protein resides in the postsynaptic cell membrane. It is found in the cell membrane. Its function is as follows. After binding acetylcholine, the AChR responds by an extensive change in conformation that affects all subunits and leads to opening of an ion-conducting channel across the plasma membrane. A subunit of the levamisole-insensitive nicotinic receptor. The chain is Acetylcholine receptor subunit alpha-type acr-16 (acr-16) from Caenorhabditis elegans.